A 1295-amino-acid polypeptide reads, in one-letter code: Phosphoribosylformylglycinamidine synthase (1295 aa).

The interval 305–327 is disordered; it reads WPGAATGSGGEIRDEGATGRGAK. Residues 307–318 and alanine 678 each bind ATP; that span reads GAATGSGGEIRD. Mg(2+)-binding residues include glutamate 718, asparagine 722, and aspartate 884. Serine 886 contacts ATP. Positions 1042 to 1295 constitute a Glutamine amidotransferase type-1 domain; it reads VAVLREQGVN…IFRNARKQLG (254 aa). Cysteine 1135 serves as the catalytic Nucleophile. Active-site residues include histidine 1260 and glutamate 1262.

In the N-terminal section; belongs to the FGAMS family. As to quaternary structure, monomer. In terms of processing, both N-terminus methionine truncation and retention have been observed for this protein.

It is found in the cytoplasm. It carries out the reaction N(2)-formyl-N(1)-(5-phospho-beta-D-ribosyl)glycinamide + L-glutamine + ATP + H2O = 2-formamido-N(1)-(5-O-phospho-beta-D-ribosyl)acetamidine + L-glutamate + ADP + phosphate + H(+). The protein operates within purine metabolism; IMP biosynthesis via de novo pathway; 5-amino-1-(5-phospho-D-ribosyl)imidazole from N(2)-formyl-N(1)-(5-phospho-D-ribosyl)glycinamide: step 1/2. Phosphoribosylformylglycinamidine synthase involved in the purines biosynthetic pathway. Catalyzes the ATP-dependent conversion of formylglycinamide ribonucleotide (FGAR) and glutamine to yield formylglycinamidine ribonucleotide (FGAM) and glutamate. This chain is Phosphoribosylformylglycinamidine synthase, found in Escherichia coli (strain K12).